We begin with the raw amino-acid sequence, 436 residues long: Eukaryotic translation initiation factor 5 (436 aa).

Position 27–34 (27–34 (GKGNGIKT)) interacts with GTP. The interval 177–203 (NSDKGSSNDDDDDDWEPEPVEPNGMLS) is disordered. The segment covering 184–195 (NDDDDDDWEPEP) has biased composition (acidic residues). A W2 domain is found at 216–379 (EKSEEQRLDM…KEAEEETEEE (164 aa)). Over residues 396–408 (LRQQKEKAAREAQ) the composition is skewed to basic and acidic residues. The interval 396–436 (LRQQKEKAAREAQQKSAKATNGNAAAASGANDEEDLDIDDI) is disordered. Positions 409–425 (QKSAKATNGNAAAASGA) are enriched in low complexity. Positions 426–436 (NDEEDLDIDDI) are enriched in acidic residues.

It belongs to the eIF-2-beta/eIF-5 family.

In terms of biological role, catalyzes the hydrolysis of GTP bound to the 40S ribosomal initiation complex (40S.mRNA.Met-tRNA[F].eIF-2.GTP) with the subsequent joining of a 60S ribosomal subunit resulting in the release of eIF-2 and the guanine nucleotide. The subsequent joining of a 60S ribosomal subunit results in the formation of a functional 80S initiation complex (80S.mRNA.Met-tRNA[F]). This Caenorhabditis elegans protein is Eukaryotic translation initiation factor 5.